Consider the following 66-residue polypeptide: Regulator of G-protein signaling 6 (66 aa).

In terms of domain architecture, RGS spans 1–66 (LAVQDLKKQP…EDAQEHIYKL (66 aa)).

In terms of assembly, interacts with GNB5. Interacts with RGS7BP, leading to regulate the subcellular location of the heterodimer formed with GNB5. Interacts with GNAI1.

It is found in the cytoplasm. Its subcellular location is the cytosol. The protein localises to the membrane. The protein resides in the nucleus. It localises to the cell membrane. In terms of biological role, regulates G protein-coupled receptor signaling cascades. Inhibits signal transduction by increasing the GTPase activity of G protein alpha subunits, thereby driving them into their inactive GDP-bound form. The RGS6/GNB5 dimer enhances GNAO1 GTPase activity. This is Regulator of G-protein signaling 6 (Rgs6) from Rattus norvegicus (Rat).